Reading from the N-terminus, the 76-residue chain is UPF0346 protein LBUL_1194 (76 aa).

It belongs to the UPF0346 family.

The sequence is that of UPF0346 protein LBUL_1194 from Lactobacillus delbrueckii subsp. bulgaricus (strain ATCC BAA-365 / Lb-18).